A 286-amino-acid polypeptide reads, in one-letter code: Prohibitin-6, mitochondrial (286 aa).

At 1–12 the chain is on the mitochondrial matrix side; that stretch reads MNFKNVKVPKGP. The chain crosses the membrane as a helical; Signal-anchor for type II membrane protein span at residues 13–35; it reads GGGVIAAVVIGGLSLYGATHTLY. The Mitochondrial intermembrane portion of the chain corresponds to 36 to 286; the sequence is NVDGGHRAIV…AMDLDVKPKK (251 aa).

The protein belongs to the prohibitin family. Component of a prohibitin multimeric complex in mitochondrial membranes. In terms of tissue distribution, mostly expressed in proliferative tissues, including vasculature, shoot and root apical tissues.

Its subcellular location is the mitochondrion inner membrane. Functionally, prohibitin probably acts as a holdase/unfoldase for the stabilization of newly synthesized mitochondrial proteins. This is Prohibitin-6, mitochondrial (PHB6) from Arabidopsis thaliana (Mouse-ear cress).